Consider the following 604-residue polypeptide: Phosphomethylpyrimidine synthase (604 aa).

Substrate-binding positions include Asn218, Met247, Tyr276, His312, 332-334 (SRG), 373-376 (DGLR), and Glu412. His416 is a binding site for Zn(2+). A substrate-binding site is contributed by Tyr439. Residue His480 participates in Zn(2+) binding. [4Fe-4S] cluster is bound by residues Cys560, Cys563, and Cys568.

The protein belongs to the ThiC family. As to quaternary structure, homodimer. [4Fe-4S] cluster serves as cofactor.

The enzyme catalyses 5-amino-1-(5-phospho-beta-D-ribosyl)imidazole + S-adenosyl-L-methionine = 4-amino-2-methyl-5-(phosphooxymethyl)pyrimidine + CO + 5'-deoxyadenosine + formate + L-methionine + 3 H(+). The protein operates within cofactor biosynthesis; thiamine diphosphate biosynthesis. In terms of biological role, catalyzes the synthesis of the hydroxymethylpyrimidine phosphate (HMP-P) moiety of thiamine from aminoimidazole ribotide (AIR) in a radical S-adenosyl-L-methionine (SAM)-dependent reaction. The sequence is that of Phosphomethylpyrimidine synthase from Zymomonas mobilis subsp. mobilis (strain ATCC 31821 / ZM4 / CP4).